The following is a 107-amino-acid chain: Nucleoid-associated protein BAbS19_I00290 (107 aa).

Belongs to the YbaB/EbfC family. As to quaternary structure, homodimer.

The protein localises to the cytoplasm. The protein resides in the nucleoid. In terms of biological role, binds to DNA and alters its conformation. May be involved in regulation of gene expression, nucleoid organization and DNA protection. The chain is Nucleoid-associated protein BAbS19_I00290 from Brucella abortus (strain S19).